The primary structure comprises 95 residues: Aspartyl/glutamyl-tRNA(Asn/Gln) amidotransferase subunit C (95 aa).

Belongs to the GatC family. Heterotrimer of A, B and C subunits.

The catalysed reaction is L-glutamyl-tRNA(Gln) + L-glutamine + ATP + H2O = L-glutaminyl-tRNA(Gln) + L-glutamate + ADP + phosphate + H(+). It catalyses the reaction L-aspartyl-tRNA(Asn) + L-glutamine + ATP + H2O = L-asparaginyl-tRNA(Asn) + L-glutamate + ADP + phosphate + 2 H(+). Its function is as follows. Allows the formation of correctly charged Asn-tRNA(Asn) or Gln-tRNA(Gln) through the transamidation of misacylated Asp-tRNA(Asn) or Glu-tRNA(Gln) in organisms which lack either or both of asparaginyl-tRNA or glutaminyl-tRNA synthetases. The reaction takes place in the presence of glutamine and ATP through an activated phospho-Asp-tRNA(Asn) or phospho-Glu-tRNA(Gln). This chain is Aspartyl/glutamyl-tRNA(Asn/Gln) amidotransferase subunit C, found in Rhizobium johnstonii (strain DSM 114642 / LMG 32736 / 3841) (Rhizobium leguminosarum bv. viciae).